The following is a 942-amino-acid chain: Inter-alpha-trypsin inhibitor heavy chain H5 (942 aa).

A signal peptide spans 1–16; the sequence is MLLLLGLCLGLSLCVG. The 127-residue stretch at 35 to 161 folds into the VIT domain; sequence VPRQVRLLQR…KAAFFLSYEE (127 aa). 2 N-linked (GlcNAc...) asparagine glycosylation sites follow: asparagine 97 and asparagine 127. Disordered regions lie at residues 116–136 and 208–227; these read KKSGDRVKEKRNKTTEENGEK and SRQRGSGRGEDDSGPPPSTV. Residues asparagine 231, asparagine 421, and asparagine 508 are each glycosylated (N-linked (GlcNAc...) asparagine). A VWFA domain is found at 295–478; the sequence is NVVFVLDSSA…SQLIGFYDEI (184 aa). A disordered region spans residues 550-571; the sequence is QKAGKDVTGSPRPGGDGEGDTN. N-linked (GlcNAc...) asparagine glycosylation is found at asparagine 776, asparagine 795, and asparagine 862.

Belongs to the ITIH family. Abundantly expressed in placenta. Less abundant expression in mammary gland and ovary. Expression is barely detectable levels in all other tissues tested.

Its subcellular location is the secreted. In terms of biological role, may act as a tumor suppressor. The sequence is that of Inter-alpha-trypsin inhibitor heavy chain H5 (ITIH5) from Homo sapiens (Human).